Reading from the N-terminus, the 373-residue chain is MTQTDNPVPNCGLLPEQQYCSADHEEPLLLHEEQLIFPDHSSQLSSADIIEPIKMNSSTESIIGTTLRKKWVPLSSTQITALSGAFAGFLSGVAVCPLDVAKTRLQAQGLQTRFENPYYRGIMGTLSTIVRDEGPRGLYKGLVPIVLGYFPTWMIYFSVYEFSKKFFHGIFPQFDFVAQSCAAITAGAASTTLTNPIWVVKTRLMLQSNLGEHPTHYKGTFDAFRKLFYQEGFKALYAGLVPSLLGLFHVAIHFPIYEDLKVRFHCYSRENNTNSINLQRLIMASSVSKMIASAVTYPHEILRTRMQLKSDIPDSIQRRLFPLIKATYAQEGLKGFYSGFTTNLVRTIPASAITLVSFEYFRNRLENISTMVI.

At 1–80 the chain is on the mitochondrial matrix side; the sequence is MTQTDNPVPN…WVPLSSTQIT (80 aa). 3 Solcar repeats span residues 75–166, 174–263, and 276–364; these read SSTQ…SKKF, FDFV…LKVR, and INLQ…FRNR. The chain crosses the membrane as a helical span at residues 81–101; that stretch reads ALSGAFAGFLSGVAVCPLDVA. Topologically, residues 102-141 are mitochondrial intermembrane; that stretch reads KTRLQAQGLQTRFENPYYRGIMGTLSTIVRDEGPRGLYKG. A helical membrane pass occupies residues 142-162; the sequence is LVPIVLGYFPTWMIYFSVYEF. Residues 163-176 are Mitochondrial matrix-facing; sequence SKKFFHGIFPQFDF. A helical transmembrane segment spans residues 177–199; it reads VAQSCAAITAGAASTTLTNPIWV. Over 200–235 the chain is Mitochondrial intermembrane; the sequence is VKTRLMLQSNLGEHPTHYKGTFDAFRKLFYQEGFKA. A helical transmembrane segment spans residues 236–256; that stretch reads LYAGLVPSLLGLFHVAIHFPI. The Mitochondrial matrix segment spans residues 257-280; it reads YEDLKVRFHCYSRENNTNSINLQR. A helical membrane pass occupies residues 281–297; it reads LIMASSVSKMIASAVTY. At 298–335 the chain is on the mitochondrial intermembrane side; that stretch reads PHEILRTRMQLKSDIPDSIQRRLFPLIKATYAQEGLKG. A helical transmembrane segment spans residues 336–358; sequence FYSGFTTNLVRTIPASAITLVSF. The Mitochondrial matrix segment spans residues 359–373; the sequence is EYFRNRLENISTMVI.

Belongs to the mitochondrial carrier (TC 2.A.29) family.

It is found in the mitochondrion inner membrane. The catalysed reaction is dAMP(in) + NAD(+)(out) = dAMP(out) + NAD(+)(in). The enzyme catalyses dGMP(in) + NAD(+)(out) = dGMP(out) + NAD(+)(in). It carries out the reaction GMP(in) + NAD(+)(out) = GMP(out) + NAD(+)(in). It catalyses the reaction AMP(in) + NAD(+)(out) = AMP(out) + NAD(+)(in). The catalysed reaction is deamido-NAD(+)(in) + NAD(+)(out) = deamido-NAD(+)(out) + NAD(+)(in). Its function is as follows. Mitochondrial inner membrane carrier protein that mediates the import of NAD(+) into mitochondria. Can transport NAD(+) by unidirectional transport or by exchange with intramitochondrially generated dAMP and dGMP. Also able to transport NAD(+) by exchange with AMP, GMP or deamido-NAD (+) in vitro. This Saccharomyces cerevisiae (strain ATCC 204508 / S288c) (Baker's yeast) protein is Mitochondrial nicotinamide adenine dinucleotide transporter 1 (YIA6).